The following is a 1311-amino-acid chain: MGTASSLVNPGEVIEDTYGGGGGEACVIPVEVKPKARLLRSSFRRGPRVIGASFKSTASVDLEYAAEYERLKKEYEIFRVSKNNEIASMQKKEVKLDEENKRLRAELQALQKTYQKILREKESAVEAKYQAMERAATFEHDRDKVKRQFKIFRETKEKEIQDLLRAKRDLEAKLQRLQAQGIQVFDPGESDSDDNGTELTVPGTQCEYWTSGGLGSEPSIGSMMQLQQSFRGPEFAHSSIDVEGPFANVNRDDWDAAVASLLQVTPLFSQSLWSNTVRCYLMYTAETQAEVKIFLKEYSPKLQRMCETSGYFFQVTFFPEECENQYFAVRKWEIEKSSIVILFICSSLPSCLQEDCEEAFLKNTEAKPCLIYHRIEDGRSDSEGLKQLLEQDTNKANKTKIVDHYGDPVEGANKIYCQLEQVINQDLLGIEITDPNAKDDSATKEEDDFWDVLWDVHDEQEQMEAFQQASHSICELGFQKYYDRLNDLVAAPAPIPPLLISGGPGSGKSLLLSKWIQLQQKHSPNTLMLYHFVGRPLSSSSEPSLMIKRLFLKLMQHSWSVSSLSLDPAKFLEEFPHWLEKLSIRYQGNIIIIIDSIDHIQQSEKHMKWLIDPLPVNVRVIVSVNVETCPQAWRLWPTLHLDPLNSKDVKSLINMECGRANIILTKEQERKLERHCRSATTCNALYVTLIAKLLTWAGSTGNIDDVLQLCLQCQDTVSLYRLALHSVQEVMPSAKDKEFMREILCFISASRNGVSECELMELCPGLTWPVLTSLIFHLYTLVLLKYSCGLIQFQHLQEILSFNILNFKAWDAVNLEYMQGDQSIISEYREKLIQHFNAQLSCDRVTWRSADELTWLYQQQGEKQKLHRCLMNLFVSQNLYKRGHFAELLSYWQLVGKDKISMASEYFDALKQYERSCEGEEKMTSLADLYETLGRFLKDLGLLSQAVTPLQRSLEIRETALDPDHPSVAQSLHQLAGVYVQSKKFGNAEQLYKQALEISENAYGSEHMRVARELDALAVLYQKQNKFEQAEQLRKKSLKIRQKSARRKGSMYGFALLRRRALQLEELTLGKDTSDNARTLNELGVLYYLQNNLETAETFLKRSLEMRERVLGADHPDCAQSINNLAALYNEKKQYDKAEELYERALDIRRRALSPDHPSLAYTVKHLAVLYKRKGKLDKAVPLYELAVEIRQKSFGPKHPSVATALVNLAVLYCQMKKQAEASPLYERAMKIYEDSLGRMHPRVGETLKNLAVLRYEEGDFEKAAELYKRAMEIKETETSVLGAKAHSGHSSSGGDTYSVQNALPVCAFPE.

Residues Ser81–Gln183 are a coiled coil. 9 TPR repeats span residues Leu889–Met923, Ala927–Ala960, Ala969–Ala1002, Ala1011–Ser1044, Ala1077–Val1110, Ala1119–Ala1152, Ala1161–Ser1194, Ala1203–Ser1236, and Gly1245–Glu1278.

Its subcellular location is the cell projection. It localises to the cilium. In terms of biological role, required for normal ciliary development and function. Inhibits disheveled-1-induced canonical Wnt-signaling activity and may also play a role in the control of non-canonical Wnt signaling that regulates planar cell polarity. Probably acts as a molecular switch between different Wnt signaling pathways. Required for proper convergent extension cell movements. The chain is Nephrocystin-3 (nphp3) from Xenopus tropicalis (Western clawed frog).